The following is a 111-amino-acid chain: Cytochrome c oxidase subunit 6A1, mitochondrial (111 aa).

Residues Met1 to Met26 constitute a mitochondrion transit peptide. Residues Ser27–Ser36 lie on the Mitochondrial matrix side of the membrane. Residues Ala37–Leu61 traverse the membrane as a helical segment. Residues Lys62 to Glu111 lie on the Mitochondrial intermembrane side of the membrane.

Belongs to the cytochrome c oxidase subunit 6A family. As to quaternary structure, component of the cytochrome c oxidase (complex IV, CIV), a multisubunit enzyme composed of 14 subunits. The complex is composed of a catalytic core of 3 subunits MT-CO1, MT-CO2 and MT-CO3, encoded in the mitochondrial DNA, and 11 supernumerary subunits COX4I, COX5A, COX5B, COX6A, COX6B, COX6C, COX7A, COX7B, COX7C, COX8 and NDUFA4, which are encoded in the nuclear genome. The complex exists as a monomer or a dimer and forms supercomplexes (SCs) in the inner mitochondrial membrane with NADH-ubiquinone oxidoreductase (complex I, CI) and ubiquinol-cytochrome c oxidoreductase (cytochrome b-c1 complex, complex III, CIII), resulting in different assemblies (supercomplex SCI(1)III(2)IV(1) and megacomplex MCI(2)III(2)IV(2)).

The protein resides in the mitochondrion inner membrane. The protein operates within energy metabolism; oxidative phosphorylation. In terms of biological role, component of the cytochrome c oxidase, the last enzyme in the mitochondrial electron transport chain which drives oxidative phosphorylation. The respiratory chain contains 3 multisubunit complexes succinate dehydrogenase (complex II, CII), ubiquinol-cytochrome c oxidoreductase (cytochrome b-c1 complex, complex III, CIII) and cytochrome c oxidase (complex IV, CIV), that cooperate to transfer electrons derived from NADH and succinate to molecular oxygen, creating an electrochemical gradient over the inner membrane that drives transmembrane transport and the ATP synthase. Cytochrome c oxidase is the component of the respiratory chain that catalyzes the reduction of oxygen to water. Electrons originating from reduced cytochrome c in the intermembrane space (IMS) are transferred via the dinuclear copper A center (CU(A)) of subunit 2 and heme A of subunit 1 to the active site in subunit 1, a binuclear center (BNC) formed by heme A3 and copper B (CU(B)). The BNC reduces molecular oxygen to 2 water molecules unsing 4 electrons from cytochrome c in the IMS and 4 protons from the mitochondrial matrix. The chain is Cytochrome c oxidase subunit 6A1, mitochondrial (Cox6a1) from Rattus norvegicus (Rat).